The sequence spans 264 residues: MNAIQPDDAGYWLLTQDSALYLINGELPQGKAADFQLQGYNGMIIGELNGRPLWLVEEIADDQRTYFSLRSLLALPEAHFNLLNRGVELNHFFKTHRFCGKCGHPTDLVQQEWAIQCQNPSCSHRTYPVICPCIIVAVRRGAQILLANHQRHKGGIYTTLAGFVEVGETFEQAVHREVLEETGIQIQNLRYFGSQPWAFPNSAMIGFLADYAGGEICVQEMEIHDAQWFDYNAPLPELPPKGTIALKLIEHTLQLCAEEERKAT.

Residue Arg-70 coordinates substrate. The Zn(2+) site is built by Cys-99 and Cys-102. Glu-112 provides a ligand contact to substrate. The Zn(2+) site is built by Cys-117 and Cys-122. Residue Tyr-127 coordinates substrate. One can recognise a Nudix hydrolase domain in the interval 128–252; the sequence is PVICPCIIVA…TIALKLIEHT (125 aa). The a divalent metal cation site is built by Ala-161, Glu-177, and Glu-181. The Nudix box motif lies at 162–183; it reads GFVEVGETFEQAVHREVLEETG. 195 to 202 contacts substrate; that stretch reads QPWAFPNS. Glu-222 is a binding site for a divalent metal cation. Ala-245 is a binding site for substrate.

The protein belongs to the Nudix hydrolase family. NudC subfamily. As to quaternary structure, homodimer. Requires Mg(2+) as cofactor. Mn(2+) is required as a cofactor. It depends on Zn(2+) as a cofactor.

The catalysed reaction is a 5'-end NAD(+)-phospho-ribonucleoside in mRNA + H2O = a 5'-end phospho-adenosine-phospho-ribonucleoside in mRNA + beta-nicotinamide D-ribonucleotide + 2 H(+). The enzyme catalyses NAD(+) + H2O = beta-nicotinamide D-ribonucleotide + AMP + 2 H(+). It catalyses the reaction NADH + H2O = reduced beta-nicotinamide D-ribonucleotide + AMP + 2 H(+). In terms of biological role, mRNA decapping enzyme that specifically removes the nicotinamide adenine dinucleotide (NAD) cap from a subset of mRNAs by hydrolyzing the diphosphate linkage to produce nicotinamide mononucleotide (NMN) and 5' monophosphate mRNA. The NAD-cap is present at the 5'-end of some mRNAs and stabilizes RNA against 5'-processing. Has preference for mRNAs with a 5'-end purine. Catalyzes the hydrolysis of a broad range of dinucleotide pyrophosphates. The protein is NAD-capped RNA hydrolase NudC of Pasteurella multocida (strain Pm70).